Here is a 99-residue protein sequence, read N- to C-terminus: Integration host factor subunit beta (99 aa).

It belongs to the bacterial histone-like protein family. In terms of assembly, heterodimer of an alpha and a beta chain.

In terms of biological role, this protein is one of the two subunits of integration host factor, a specific DNA-binding protein that functions in genetic recombination as well as in transcriptional and translational control. The polypeptide is Integration host factor subunit beta (Laribacter hongkongensis (strain HLHK9)).